The chain runs to 408 residues: MSKADVVIVGAGHGGAQCAIALRQNGFEGTITVIGREPEYPYERPPLSKEYFAREKTFDRLYIRPPTFWAEKNIEFKLGTEVTKVDPKAHELTLSNGESYGYGKLVWATGGDPRRLSCQGADLTGIHAVRTREDCDTLMAEVDAGTKNIVVIGGGYIGLEAAAVLSKMGLKVTLLEALPRVLARVAGEDLSTFYQKEHVDHGVDLRTEVMVDSLVGENGKVTGVQLAGGEVIPAEGVIVGIGIVPAVGPLIAAGAAGANGVDVDEYCRTSLPDIYAIGDCAAFACDYAGGNVMRVESVQNANDMGTCVAKAICGDEKPYKAFPWFWSNQYDLKLQTAGINLGFDKTVIRGNPEERSFSVVYLKDGRVVALDCVNMVKDYVQGRKLVEAGATPDLEALADAGKPLKELL.

The FAD site is built by G14, K49, V82, R130, D279, and V298.

It belongs to the FAD-dependent oxidoreductase family. In terms of assembly, monomer. The dicamba O-demethylase multicomponent enzyme system is composed of an oxygenase component (DdmC) and an electron transfer component formed by a ferredoxin reductase (DdmA1) and a ferredoxin (DdmB). In vitro, dicamba O-demethylase assays in which DdmA2 is substituted for DdmA1 demonstrate that the two enzymes possess nearly identical activities. The cofactor is FAD.

It carries out the reaction 2 reduced [2Fe-2S]-[ferredoxin] + NAD(+) + H(+) = 2 oxidized [2Fe-2S]-[ferredoxin] + NADH. Functionally, component of the dicamba O-demethylase multicomponent enzyme system involved in the degradation of the herbicide dicamba. In vitro, catalyzes the transfers of electrons from ferredoxin (DdmB) to NADH. Both NADH and NADPH support enzyme activity, with NADH being markedly more effective than NADPH. The protein is Dicamba O-demethylase 1, ferredoxin reductase component of Stenotrophomonas maltophilia (Pseudomonas maltophilia).